The sequence spans 140 residues: GTP-dependent dephospho-CoA kinase (140 aa).

Positions 21, 22, 23, 40, 42, and 92 each coordinate GTP.

The protein belongs to the GTP-dependent DPCK family.

It carries out the reaction 3'-dephospho-CoA + GTP = GDP + CoA + H(+). It functions in the pathway cofactor biosynthesis; coenzyme A biosynthesis. Its function is as follows. Catalyzes the GTP-dependent phosphorylation of the 3'-hydroxyl group of dephosphocoenzyme A to form coenzyme A (CoA). The protein is GTP-dependent dephospho-CoA kinase of Pyrobaculum aerophilum (strain ATCC 51768 / DSM 7523 / JCM 9630 / CIP 104966 / NBRC 100827 / IM2).